A 694-amino-acid polypeptide reads, in one-letter code: Methionine--tRNA ligase (694 aa).

The short motif at 12-22 (PYANGPLHLGH) is the 'HIGH' region element. 4 residues coordinate Zn(2+): Cys-143, Cys-146, Cys-156, and Cys-159. The 'KMSKS' region signature appears at 330–334 (KMSKS). ATP is bound at residue Lys-333. A disordered region spans residues 550–577 (LAAPATPATASKPAPAKADAKPAAAANP). Positions 551-575 (AAPATPATASKPAPAKADAKPAAAA) are enriched in low complexity. Residues 591–694 (DFAKLDLRIG…SGAQPGMPVR (104 aa)) form the tRNA-binding domain.

The protein belongs to the class-I aminoacyl-tRNA synthetase family. MetG type 1 subfamily. In terms of assembly, homodimer. The cofactor is Zn(2+).

Its subcellular location is the cytoplasm. The enzyme catalyses tRNA(Met) + L-methionine + ATP = L-methionyl-tRNA(Met) + AMP + diphosphate. In terms of biological role, is required not only for elongation of protein synthesis but also for the initiation of all mRNA translation through initiator tRNA(fMet) aminoacylation. The sequence is that of Methionine--tRNA ligase from Xanthomonas axonopodis pv. citri (strain 306).